Here is a 65-residue protein sequence, read N- to C-terminus: Large ribosomal subunit protein bL35 (65 aa).

The protein belongs to the bacterial ribosomal protein bL35 family.

In Clostridium kluyveri (strain NBRC 12016), this protein is Large ribosomal subunit protein bL35.